Here is a 327-residue protein sequence, read N- to C-terminus: tRNA dimethylallyltransferase (327 aa).

14–21 (GPTASGKT) lines the ATP pocket. 16–21 (TASGKT) is a binding site for substrate. 2 interaction with substrate tRNA regions span residues 39-42 (DSAL) and 163-167 (QRIQR).

It belongs to the IPP transferase family. As to quaternary structure, monomer. Mg(2+) is required as a cofactor.

It carries out the reaction adenosine(37) in tRNA + dimethylallyl diphosphate = N(6)-dimethylallyladenosine(37) in tRNA + diphosphate. Functionally, catalyzes the transfer of a dimethylallyl group onto the adenine at position 37 in tRNAs that read codons beginning with uridine, leading to the formation of N6-(dimethylallyl)adenosine (i(6)A). This is tRNA dimethylallyltransferase from Xanthomonas oryzae pv. oryzae (strain KACC10331 / KXO85).